Consider the following 1137-residue polypeptide: AP-4 complex subunit epsilon-1 (1137 aa).

Phosphoserine occurs at positions 700 and 857. The segment at 727-1137 (SGALPVPQES…YQCQKVMEGS (411 aa)) is interaction with TEPSIN.

It belongs to the adaptor complexes large subunit family. Adaptor protein complex 4 (AP-4) is a heterotetramer composed of two large adaptins (epsilon-type subunit AP4E1 and beta-type subunit AP4B1), a medium adaptin (mu-type subunit AP4M1) and a small adaptin (sigma-type AP4S1). Interacts with TEPSIN. Interacts with GRIA2; probably indirect it mediates the somatodendritic localization of GRIA2 in neurons. In terms of tissue distribution, widely expressed.

The protein localises to the golgi apparatus. The protein resides in the trans-Golgi network membrane. Its function is as follows. Component of the adaptor protein complex 4 (AP-4). Adaptor protein complexes are vesicle coat components involved both in vesicle formation and cargo selection. They control the vesicular transport of proteins in different trafficking pathways. AP-4 forms a non clathrin-associated coat on vesicles departing the trans-Golgi network (TGN) and may be involved in the targeting of proteins from the trans-Golgi network (TGN) to the endosomal-lysosomal system. It is also involved in protein sorting to the basolateral membrane in epithelial cells and the proper asymmetric localization of somatodendritic proteins in neurons. AP-4 is involved in the recognition and binding of tyrosine-based sorting signals found in the cytoplasmic part of cargos, but may also recognize other types of sorting signal. The chain is AP-4 complex subunit epsilon-1 from Homo sapiens (Human).